Consider the following 543-residue polypeptide: CTP synthase (543 aa).

The segment at 1-267 (MTKYVFVTGG…ATQVLNLLNL (267 aa)) is amidoligase domain. Position 13 (Ser13) interacts with CTP. Residue Ser13 participates in UTP binding. Residues 14–19 (SIGKGI) and Asp71 contribute to the ATP site. Positions 71 and 141 each coordinate Mg(2+). Residues 148 to 150 (DIE), 188 to 193 (KTKPTQ), and Lys224 contribute to the CTP site. UTP-binding positions include 188–193 (KTKPTQ) and Lys224. One can recognise a Glutamine amidotransferase type-1 domain in the interval 292–534 (EVAIVGKYVR…LAAAAKNSNR (243 aa)). Gly354 contributes to the L-glutamine binding site. Cys381 acts as the Nucleophile; for glutamine hydrolysis in catalysis. L-glutamine contacts are provided by residues 382–385 (LGMQ), Glu405, and Arg462. Residues His507 and Glu509 contribute to the active site.

The protein belongs to the CTP synthase family. In terms of assembly, homotetramer.

It carries out the reaction UTP + L-glutamine + ATP + H2O = CTP + L-glutamate + ADP + phosphate + 2 H(+). The catalysed reaction is L-glutamine + H2O = L-glutamate + NH4(+). The enzyme catalyses UTP + NH4(+) + ATP = CTP + ADP + phosphate + 2 H(+). It participates in pyrimidine metabolism; CTP biosynthesis via de novo pathway; CTP from UDP: step 2/2. Allosterically activated by GTP, when glutamine is the substrate; GTP has no effect on the reaction when ammonia is the substrate. The allosteric effector GTP functions by stabilizing the protein conformation that binds the tetrahedral intermediate(s) formed during glutamine hydrolysis. Inhibited by the product CTP, via allosteric rather than competitive inhibition. Functionally, catalyzes the ATP-dependent amination of UTP to CTP with either L-glutamine or ammonia as the source of nitrogen. Regulates intracellular CTP levels through interactions with the four ribonucleotide triphosphates. This is CTP synthase from Thermosynechococcus vestitus (strain NIES-2133 / IAM M-273 / BP-1).